The primary structure comprises 133 residues: Ribosome-binding factor A (133 aa).

The protein belongs to the RbfA family. Monomer. Binds 30S ribosomal subunits, but not 50S ribosomal subunits or 70S ribosomes.

Its subcellular location is the cytoplasm. Functionally, one of several proteins that assist in the late maturation steps of the functional core of the 30S ribosomal subunit. Associates with free 30S ribosomal subunits (but not with 30S subunits that are part of 70S ribosomes or polysomes). Required for efficient processing of 16S rRNA. May interact with the 5'-terminal helix region of 16S rRNA. This Nostoc sp. (strain PCC 7120 / SAG 25.82 / UTEX 2576) protein is Ribosome-binding factor A.